The primary structure comprises 372 residues: 4-hydroxy-3-methylbut-2-en-1-yl diphosphate synthase (flavodoxin) (372 aa).

Positions 270, 273, 305, and 312 each coordinate [4Fe-4S] cluster.

The protein belongs to the IspG family. [4Fe-4S] cluster is required as a cofactor.

The enzyme catalyses (2E)-4-hydroxy-3-methylbut-2-enyl diphosphate + oxidized [flavodoxin] + H2O + 2 H(+) = 2-C-methyl-D-erythritol 2,4-cyclic diphosphate + reduced [flavodoxin]. It functions in the pathway isoprenoid biosynthesis; isopentenyl diphosphate biosynthesis via DXP pathway; isopentenyl diphosphate from 1-deoxy-D-xylulose 5-phosphate: step 5/6. Its function is as follows. Converts 2C-methyl-D-erythritol 2,4-cyclodiphosphate (ME-2,4cPP) into 1-hydroxy-2-methyl-2-(E)-butenyl 4-diphosphate. This is 4-hydroxy-3-methylbut-2-en-1-yl diphosphate synthase (flavodoxin) from Escherichia coli O9:H4 (strain HS).